An 815-amino-acid polypeptide reads, in one-letter code: Phenylalanine--tRNA ligase beta subunit (815 aa).

The tRNA-binding domain occupies 40–155 (APPFDKIVVA…EDAPVGQNIR (116 aa)). Positions 406–485 (PQRRPVSLRL…RIYGFERIAA (80 aa)) constitute a B5 domain. D463, D469, E472, and E473 together coordinate Mg(2+). Residues 712 to 814 (SKFPAAVRDL…LGEAFQARLR (103 aa)) form the FDX-ACB domain.

The protein belongs to the phenylalanyl-tRNA synthetase beta subunit family. Type 1 subfamily. In terms of assembly, tetramer of two alpha and two beta subunits. Mg(2+) is required as a cofactor.

It is found in the cytoplasm. It carries out the reaction tRNA(Phe) + L-phenylalanine + ATP = L-phenylalanyl-tRNA(Phe) + AMP + diphosphate + H(+). This Cupriavidus pinatubonensis (strain JMP 134 / LMG 1197) (Cupriavidus necator (strain JMP 134)) protein is Phenylalanine--tRNA ligase beta subunit.